The sequence spans 506 residues: Maturase K (506 aa).

It belongs to the intron maturase 2 family. MatK subfamily.

Its subcellular location is the plastid. The protein resides in the chloroplast. Functionally, usually encoded in the trnK tRNA gene intron. Probably assists in splicing its own and other chloroplast group II introns. The sequence is that of Maturase K from Styphnolobium japonicum (Japanese pagoda tree).